The sequence spans 630 residues: Plastin-3 (630 aa).

EF-hand domains lie at 12–47 and 52–87; these read DELDELKEAFAKVDLNSNGFICDYELHELFKEANMP and KVREIIQKLMLDGDRNKDGKISFDEFVYIFQEVKSS. Ca(2+) contacts are provided by Asp25, Asn27, Asn29, Glu36, Asp65, Asn67, Asp69, Lys71, and Glu76. Actin-binding regions lie at residues 109–382 and 383–627; these read TSEL…ALTK and PENQ…GRGM. Calponin-homology (CH) domains follow at residues 123-239 and 267-378; these read EEEK…KIGL and LSPE…NKYP. Ser268, Ser293, Ser326, and Ser339 each carry phosphoserine. Residue Thr391 is modified to Phosphothreonine. 2 consecutive Calponin-homology (CH) domains span residues 397-506 and 518-627; these read TREE…RRYT and KAND…GRGM.

As to quaternary structure, monomer.

The protein localises to the cytoplasm. Actin-bundling protein. This chain is Plastin-3 (PLS3), found in Bos taurus (Bovine).